The primary structure comprises 60 residues: Ferredoxin (60 aa).

4Fe-4S ferredoxin-type domains are found at residues 2-30 (VTID…EIQG) and 31-60 (DKVV…TVKE). [4Fe-4S] cluster-binding residues include cysteine 9, cysteine 14, cysteine 17, cysteine 21, cysteine 41, cysteine 44, cysteine 47, and cysteine 51.

The cofactor is [4Fe-4S] cluster.

Ferredoxins are iron-sulfur proteins that transfer electrons probably in the CO-dehydrogenase complex. The sequence is that of Ferredoxin from Methanothermococcus thermolithotrophicus (Methanococcus thermolithotrophicus).